A 185-amino-acid polypeptide reads, in one-letter code: MLILVLAINFLGTVYGYYWYLPQLLETPARFLIFVPDSPTATFFFLFVLLAFLMKRNAPLLEALALVTLVKYGLWAVAMNFLVLAVTGDLPWEGYMLIASHFAMAVQGVLYSPYFRFSFWHLAIAAVWTLHNDVIDYLFDMMPQYSMLSDYMTEIGYGTFWLSIFSIALAYFLVVSKKQTKLELM.

A run of 3 helical transmembrane segments spans residues 32 to 52 (LIFVPDSPTATFFFLFVLLAF), 66 to 86 (LVTLVKYGLWAVAMNFLVLAV), and 155 to 175 (IGYGTFWLSIFSIALAYFLVV).

The protein localises to the cell membrane. This is an uncharacterized protein from Bacillus subtilis (strain 168).